The following is a 450-amino-acid chain: Chromosomal replication initiator protein DnaA (450 aa).

Residues 1–84 (MENIHDLWDR…AVKFIIPPNQ (84 aa)) are domain I, interacts with DnaA modulators. Residues 84 to 111 (QDDEELEFQSSKKKQRKPYEETNDFPQS) are domain II. The tract at residues 89–108 (LEFQSSKKKQRKPYEETNDF) is disordered. The tract at residues 112-328 (MLNPKYTFDT…GALIRVVAYS (217 aa)) is domain III, AAA+ region. Residues glycine 156, glycine 158, lysine 159, and threonine 160 each contribute to the ATP site. The domain IV, binds dsDNA stretch occupies residues 329-450 (SLINKEITAD…QEIQEKLKQL (122 aa)).

Belongs to the DnaA family. Oligomerizes as a right-handed, spiral filament on DNA at oriC.

The protein localises to the cytoplasm. Its function is as follows. Plays an essential role in the initiation and regulation of chromosomal replication. ATP-DnaA binds to the origin of replication (oriC) to initiate formation of the DNA replication initiation complex once per cell cycle. Binds the DnaA box (a 9 base pair repeat at the origin) and separates the double-stranded (ds)DNA. Forms a right-handed helical filament on oriC DNA; dsDNA binds to the exterior of the filament while single-stranded (ss)DNA is stabiized in the filament's interior. The ATP-DnaA-oriC complex binds and stabilizes one strand of the AT-rich DNA unwinding element (DUE), permitting loading of DNA polymerase. After initiation quickly degrades to an ADP-DnaA complex that is not apt for DNA replication. Binds acidic phospholipids. This chain is Chromosomal replication initiator protein DnaA, found in Geobacillus kaustophilus (strain HTA426).